The following is a 201-amino-acid chain: uncharacterized protein (201 aa).

The signal sequence occupies residues 1–19; the sequence is MKLIVSVFLIGCQFLNILG.

This is an uncharacterized protein from Acheta domesticus (House cricket).